Consider the following 172-residue polypeptide: R-phycocyanin-1 beta chain (172 aa).

The residue at position 72 (N72) is an N4-methylasparagine. (2R,3E)-phycocyanobilin is bound at residue C82. Residue C153 coordinates (2R,3E)-phycoerythrobilin.

This sequence belongs to the phycobiliprotein family. Heterodimer of an alpha and a beta chain. Dimers further assemble into trimers and the trimers into hexamers. The basic functional unit of phycobiliproteins is a ring-shaped hexamer formed from two back-to-back trimers contacting via the alpha chain subunits. The trimers are composed of alpha/beta subunit heterodimers arranged around a three-fold axis of symmetry. The phycoerythrins also contain a gamma subunit which is located in the center of the hexamer. In terms of processing, contains two covalently linked bilin chromophores.

The protein localises to the plastid. Its subcellular location is the chloroplast thylakoid membrane. Light-harvesting photosynthetic bile pigment-protein from the phycobiliprotein complex (phycobilisome, PBS). Phycocyanin is the major phycobiliprotein in the PBS rod. This is R-phycocyanin-1 beta chain (rpcB) from Porphyridium purpureum (Red alga).